The primary structure comprises 338 residues: Replication factor C small subunit (338 aa).

53–60 (GPPGVGKT) lines the ATP pocket.

It belongs to the activator 1 small subunits family. RfcS subfamily. Heteromultimer composed of small subunits (RfcS) and large subunits (RfcL).

Its function is as follows. Part of the RFC clamp loader complex which loads the PCNA sliding clamp onto DNA. This Methanosarcina mazei (strain ATCC BAA-159 / DSM 3647 / Goe1 / Go1 / JCM 11833 / OCM 88) (Methanosarcina frisia) protein is Replication factor C small subunit.